A 207-amino-acid polypeptide reads, in one-letter code: Dephospho-CoA kinase (207 aa).

The 197-residue stretch at 11–207 folds into the DPCK domain; the sequence is RIGLTGGIAS…LLKMSPTAEL (197 aa). 19–24 serves as a coordination point for ATP; that stretch reads ASGKSS.

This sequence belongs to the CoaE family.

Its subcellular location is the cytoplasm. It catalyses the reaction 3'-dephospho-CoA + ATP = ADP + CoA + H(+). Its pathway is cofactor biosynthesis; coenzyme A biosynthesis; CoA from (R)-pantothenate: step 5/5. In terms of biological role, catalyzes the phosphorylation of the 3'-hydroxyl group of dephosphocoenzyme A to form coenzyme A. This Synechococcus sp. (strain CC9605) protein is Dephospho-CoA kinase.